A 713-amino-acid polypeptide reads, in one-letter code: Phosphoribosylformylglycinamidine synthase subunit PurL (713 aa).

His-34 is an active-site residue. Positions 37 and 73 each coordinate ATP. A Mg(2+)-binding site is contributed by Glu-75. Substrate-binding positions include 76–79 (SHNH) and Arg-98. Residue His-77 is the Proton acceptor of the active site. Asp-99 provides a ligand contact to Mg(2+). Gln-221 contacts substrate. Asp-249 is a binding site for Mg(2+). Residue 292 to 294 (ESQ) participates in substrate binding. ATP-binding residues include Asp-474 and Gly-511. Ser-514 contributes to the substrate binding site.

The protein belongs to the FGAMS family. As to quaternary structure, monomer. Part of the FGAM synthase complex composed of 1 PurL, 1 PurQ and 2 PurS subunits.

The protein resides in the cytoplasm. It carries out the reaction N(2)-formyl-N(1)-(5-phospho-beta-D-ribosyl)glycinamide + L-glutamine + ATP + H2O = 2-formamido-N(1)-(5-O-phospho-beta-D-ribosyl)acetamidine + L-glutamate + ADP + phosphate + H(+). Its pathway is purine metabolism; IMP biosynthesis via de novo pathway; 5-amino-1-(5-phospho-D-ribosyl)imidazole from N(2)-formyl-N(1)-(5-phospho-D-ribosyl)glycinamide: step 1/2. Part of the phosphoribosylformylglycinamidine synthase complex involved in the purines biosynthetic pathway. Catalyzes the ATP-dependent conversion of formylglycinamide ribonucleotide (FGAR) and glutamine to yield formylglycinamidine ribonucleotide (FGAM) and glutamate. The FGAM synthase complex is composed of three subunits. PurQ produces an ammonia molecule by converting glutamine to glutamate. PurL transfers the ammonia molecule to FGAR to form FGAM in an ATP-dependent manner. PurS interacts with PurQ and PurL and is thought to assist in the transfer of the ammonia molecule from PurQ to PurL. This chain is Phosphoribosylformylglycinamidine synthase subunit PurL, found in Ignicoccus hospitalis (strain KIN4/I / DSM 18386 / JCM 14125).